The primary structure comprises 236 residues: uncharacterized protein (236 aa).

Residues 1–17 (MSVSSLLQPNTYNINSK) are compositionally biased toward polar residues. Residues 1 to 94 (MSVSSLLQPN…GVKGTTGGTI (94 aa)) form a disordered region. The span at 18 to 35 (SQSLSNTPSNPTSQTNTL) shows a compositional bias: low complexity. Residues 58 to 91 (GPSGPKGDKGDPGSKGETGSQGIKGDPGVKGTTG) enclose the Collagen-like domain.

This sequence belongs to the sputnik virus V6 family.

This is an uncharacterized protein from Sputnik virophage.